We begin with the raw amino-acid sequence, 200 residues long: Pyridoxine/pyridoxamine 5'-phosphate oxidase (200 aa).

Residues 48–53 (RMVLLK), 63–64 (YT), Lys-70, and Gln-92 contribute to the FMN site. Lys-53 is a binding site for substrate. Residues Tyr-110, Arg-114, and Ser-118 each coordinate substrate. FMN contacts are provided by residues 127–128 (QS) and Trp-171. Substrate is bound at residue 177–179 (RLH). Arg-181 contributes to the FMN binding site.

Belongs to the pyridoxamine 5'-phosphate oxidase family. In terms of assembly, homodimer. The cofactor is FMN.

The enzyme catalyses pyridoxamine 5'-phosphate + O2 + H2O = pyridoxal 5'-phosphate + H2O2 + NH4(+). It catalyses the reaction pyridoxine 5'-phosphate + O2 = pyridoxal 5'-phosphate + H2O2. Its pathway is cofactor metabolism; pyridoxal 5'-phosphate salvage; pyridoxal 5'-phosphate from pyridoxamine 5'-phosphate: step 1/1. It participates in cofactor metabolism; pyridoxal 5'-phosphate salvage; pyridoxal 5'-phosphate from pyridoxine 5'-phosphate: step 1/1. Its function is as follows. Catalyzes the oxidation of either pyridoxine 5'-phosphate (PNP) or pyridoxamine 5'-phosphate (PMP) into pyridoxal 5'-phosphate (PLP). This is Pyridoxine/pyridoxamine 5'-phosphate oxidase from Cereibacter sphaeroides (strain ATCC 17029 / ATH 2.4.9) (Rhodobacter sphaeroides).